The following is a 503-amino-acid chain: ESX-5 secretion system protein EccD5 (503 aa).

10 helical membrane passes run 137-157 (VVAVQVGAGMVGTGVILASGV), 169-189 (LTTIFASVIAVLVLMVAMMLL), 200-220 (VADIMLVSGLAPLTVAAASAP), 224-244 (VGSPQAVLGFGVLSIAAALAL), 250-270 (RLAIYTAIVTICGLTTLASLS), 272-292 (MVAATSAVTLFATMLLICVVM), 359-379 (FLSGLLVGLGVLMVVSLTSLC), 414-434 (ITLAVTAVIVVAAVSVRYALV), 443-463 (IVASLLVLLPAAGMTAAAVVP), and 480-500 (YLCLMPIFPLAFWLMNVYAAI).

The protein belongs to the EccD/Snm4 family. As to quaternary structure, part of the ESX-5 / type VII secretion system (T7SS), which is composed of cytosolic and membrane components. The ESX-5 membrane complex is composed of EccB5, EccC5, EccD5 and EccE5.

It localises to the cell inner membrane. Its function is as follows. Part of the ESX-5 specialized secretion system, which is responsible for the secretion of EsxN and a number of PE_PGRS and PPE proteins. This component is essential for ESX-5 complex stability and secretion. The chain is ESX-5 secretion system protein EccD5 from Mycobacterium marinum (strain ATCC BAA-535 / M).